A 215-amino-acid polypeptide reads, in one-letter code: Charged multivesicular body protein 5 (215 aa).

Residues 29 to 81 adopt a coiled-coil conformation; sequence QMDEKINGLNQELLAYDKQIKATRPGPAQNAIKQKAIRVLQQKKMYERQRDQM. Residues 186–215 are disordered; it reads TPSVPTTDPHQSSVDEYGLPIGQEASQQVV. Residues 188-199 show a composition bias toward polar residues; sequence SVPTTDPHQSSV.

It belongs to the SNF7 family. In terms of assembly, probable peripherally associated component of the endosomal sorting required for transport complex III (ESCRT-III).

It is found in the endosome membrane. Functionally, probable peripherally associated component of the endosomal sorting required for transport complex III (ESCRT-III) which is involved in multivesicular bodies (MVBs) formation and sorting of endosomal cargo proteins into MVBs. MVBs contain intraluminal vesicles (ILVs) that are generated by invagination and scission from the limiting membrane of the endosome and are delivered to lysosomes enabling degradation of membrane proteins. The polypeptide is Charged multivesicular body protein 5 (chmp5) (Dictyostelium discoideum (Social amoeba)).